The sequence spans 1087 residues: Voltage-gated inwardly rectifying potassium channel KCNH3 (1087 aa).

The Cytoplasmic segment spans residues 1 to 228 (MPAMRGLLAP…HCGALRATWD (228 aa)). Positions 18–90 (IATRFDGTHS…QQIRKALDEH (73 aa)) constitute a PAS domain. The PAC domain maps to 93–145 (FKAELILYRKSGLPFWCLLDVIPIKNEKGEVALFLVSHKDISETKNRGGPDNW). Residues 137–150 (KNRGGPDNWKERGG) are compositionally biased toward basic and acidic residues. Residues 137–161 (KNRGGPDNWKERGGGRRRYGRAGSK) are disordered. A helical transmembrane segment spans residues 229–249 (GFILLATLYVAVTVPYSVCVS). The Extracellular segment spans residues 250–259 (TAREPSAARG). A helical transmembrane segment spans residues 260 to 280 (PPSVCDLAVEVLFILDIVLNF). Residues 281–302 (RTTFVSKSGQVVFAPKSICLHY) are Cytoplasmic-facing. The chain crosses the membrane as a helical span at residues 303-323 (VTTWFLLDVIAALPFDLLHAF). The Extracellular portion of the chain corresponds to 324–331 (KVNVYVGA). A helical; Voltage-sensor transmembrane segment spans residues 332–352 (HLLKTVRLLRLLRLLPRLDRY). Residues 353–361 (SQYSAVVLT) are Cytoplasmic-facing. A helical transmembrane segment spans residues 362 to 382 (LLMAVFALLAHWVACVWFYIG). Residues 383–456 (QQEIENSESE…GGPSLRSAYI (74 aa)) lie on the Extracellular side of the membrane. A disordered region spans residues 416–436 (SPDGGNSSGQSENCSSSGGGS). The span at 419 to 431 (GGNSSGQSENCSS) shows a compositional bias: low complexity. Residues Asn-421, Asn-428, and Asn-439 are each glycosylated (N-linked (GlcNAc...) asparagine). Positions 457-477 (TSLYFALSSLTSVGFGNVSAN) form an intramembrane region, pore-forming. The Selectivity filter motif lies at 468 to 473 (SVGFGN). The Extracellular portion of the chain corresponds to 478–482 (TDTEK). A helical transmembrane segment spans residues 483–503 (IFSICTMLIGALMHAVVFGNV). The Cytoplasmic portion of the chain corresponds to 504–1087 (TAIIQRMYAR…QWTQEEGTGV (584 aa)). 585–700 (LFEAASRGCL…FAPRFSRGLR (116 aa)) contacts a nucleoside 3',5'-cyclic phosphate. Disordered regions lie at residues 733-813 (EKET…LQLP) and 975-1061 (LMAP…PWDP). Basic residues predominate over residues 776-788 (TAPRPRLGGRGRP).

It belongs to the potassium channel family. H (Eag) (TC 1.A.1.20) subfamily. Kv12.2/KCNH3 sub-subfamily. As to quaternary structure, the potassium channel is probably composed of a homo- or heterotetrameric complex of pore-forming alpha subunits that can associate with modulating beta subunits. Interacts with KCNE1 and KCNE3; these interactions regulate KCNH3 trafficking to the plasma membrane and its subsequent voltage-gated potassium channel activity. Post-translationally, N-glycosylated. N-glycosylation mediates traffick to the cell membrane but is not necessary for voltage-gated potassium channel activity. In terms of tissue distribution, highly expressed in adult and embryonic brain, in particular in cerebellum, brain stem, hippocampus, cortex and striatum. Also found in pituitary.

The protein resides in the cell membrane. The catalysed reaction is K(+)(in) = K(+)(out). In terms of biological role, pore-forming (alpha) subunit of a voltage-gated inwardly rectifying potassium channel. Charactherized by a fast rate of activation during depolarization followed by a rapid inactivation at much more depolarized value causing inward rectification due to a C-type inactivation mechanism. Exhibits a rapid recovery from inactivation. This is Voltage-gated inwardly rectifying potassium channel KCNH3 from Rattus norvegicus (Rat).